Here is a 414-residue protein sequence, read N- to C-terminus: Isocitrate dehydrogenase [NADP] cytoplasmic (414 aa).

S2 carries the post-translational modification N-acetylserine. The residue at position 42 (Y42) is a Phosphotyrosine. 75–77 (TIT) is an NADP(+) binding site. T77 is a substrate binding site. N6-acetyllysine is present on K81. R82 contributes to the NADP(+) binding site. Residues 94-100 (SPNGTIR) and R109 contribute to the substrate site. K126 bears the N6-succinyllysine mark. 2 residues coordinate substrate: R132 and K212. 3 positions are modified to N6-acetyllysine: K224, K233, and K243. D252 provides a ligand contact to Mn(2+). K260 lines the NADP(+) pocket. Positions 275 and 279 each coordinate Mn(2+). An NADP(+)-binding site is contributed by 310–315 (GTVTRH). K321 is modified (N6-acetyllysine). NADP(+) is bound at residue N328. A Phosphoserine modification is found at S389. K400 carries the N6-succinyllysine modification.

Belongs to the isocitrate and isopropylmalate dehydrogenases family. Homodimer. Mg(2+) serves as cofactor. Mn(2+) is required as a cofactor. Acetylation at Lys-374 dramatically reduces catalytic activity. As to expression, highly expressed in the liver followed by kidney, lower expression in spleen, brain and lung.

Its subcellular location is the cytoplasm. The protein resides in the cytosol. The enzyme catalyses D-threo-isocitrate + NADP(+) = 2-oxoglutarate + CO2 + NADPH. Irreversibly inhibited by Cd(2+) concentrations above 50 uM. Catalyzes the NADP(+)-dependent oxidative decarboxylation of isocitrate (D-threo-isocitrate) to 2-ketoglutarate (2-oxoglutarate), which is required by other enzymes such as the phytanoyl-CoA dioxygenase. Plays a critical role in the generation of NADPH, an important cofactor in many biosynthesis pathways. May act as a corneal epithelial crystallin and may be involved in maintaining corneal epithelial transparency. The sequence is that of Isocitrate dehydrogenase [NADP] cytoplasmic (Idh1) from Mus musculus (Mouse).